Here is a 689-residue protein sequence, read N- to C-terminus: DNA-directed RNA polymerase subunit beta' (689 aa).

Zn(2+) is bound by residues cysteine 69, cysteine 71, cysteine 87, and cysteine 90. Mg(2+)-binding residues include aspartate 489, aspartate 491, and aspartate 493.

This sequence belongs to the RNA polymerase beta' chain family. RpoC1 subfamily. In plastids the minimal PEP RNA polymerase catalytic core is composed of four subunits: alpha, beta, beta', and beta''. When a (nuclear-encoded) sigma factor is associated with the core the holoenzyme is formed, which can initiate transcription. It depends on Mg(2+) as a cofactor. Zn(2+) is required as a cofactor.

It localises to the plastid. The protein localises to the chloroplast. The catalysed reaction is RNA(n) + a ribonucleoside 5'-triphosphate = RNA(n+1) + diphosphate. Its function is as follows. DNA-dependent RNA polymerase catalyzes the transcription of DNA into RNA using the four ribonucleoside triphosphates as substrates. This is DNA-directed RNA polymerase subunit beta' from Helianthus annuus (Common sunflower).